The chain runs to 672 residues: Serine/threonine-protein kinase ppk16 (672 aa).

The Protein kinase domain maps to 31–279 (YRIESVVGEG…IDQIISHPYF (249 aa)). ATP-binding positions include 37–45 (VGEGSFGKV) and K60. The active-site Proton acceptor is D148. S231 is modified (phosphoserine). The segment covering 375-384 (VSVMSNNQDS) has biased composition (polar residues). Disordered stretches follow at residues 375-396 (VSVM…DSSN), 416-436 (DTLS…ENYL), 464-572 (NSFG…YSNV), and 632-672 (SGRK…TDLL). Positions 472–487 (NLPQTTHVDTGEQNTP) are enriched in polar residues. Residues 508–523 (SNSQNSPSKSSNLSIN) are compositionally biased toward low complexity. Over residues 531–541 (LQNTVISPQPT) the composition is skewed to polar residues. 2 stretches are compositionally biased toward low complexity: residues 549 to 572 (RSLS…YSNV) and 639 to 649 (SSSSLMFNQSS).

It belongs to the protein kinase superfamily. Ser/Thr protein kinase family.

It localises to the cytoplasm. It catalyses the reaction L-seryl-[protein] + ATP = O-phospho-L-seryl-[protein] + ADP + H(+). The enzyme catalyses L-threonyl-[protein] + ATP = O-phospho-L-threonyl-[protein] + ADP + H(+). Its function is as follows. Has a role in meiosis. The chain is Serine/threonine-protein kinase ppk16 (ppk16) from Schizosaccharomyces pombe (strain 972 / ATCC 24843) (Fission yeast).